The chain runs to 438 residues: 3-phosphoshikimate 1-carboxyvinyltransferase 1 (438 aa).

The 3-phosphoshikimate site is built by Lys-30, Ser-31, and Arg-35. Lys-30 is a phosphoenolpyruvate binding site. The phosphoenolpyruvate site is built by Gly-104 and Arg-132. 3-phosphoshikimate-binding residues include Ser-178, Ser-179, Gln-180, Ser-207, Glu-326, and His-353. Gln-180 lines the phosphoenolpyruvate pocket. The active-site Proton acceptor is the Glu-326. Residues Arg-357, Arg-398, and Lys-423 each coordinate phosphoenolpyruvate.

This sequence belongs to the EPSP synthase family. As to quaternary structure, monomer.

The protein resides in the cytoplasm. It catalyses the reaction 3-phosphoshikimate + phosphoenolpyruvate = 5-O-(1-carboxyvinyl)-3-phosphoshikimate + phosphate. The protein operates within metabolic intermediate biosynthesis; chorismate biosynthesis; chorismate from D-erythrose 4-phosphate and phosphoenolpyruvate: step 6/7. Its function is as follows. Catalyzes the transfer of the enolpyruvyl moiety of phosphoenolpyruvate (PEP) to the 5-hydroxyl of shikimate-3-phosphate (S3P) to produce enolpyruvyl shikimate-3-phosphate and inorganic phosphate. The protein is 3-phosphoshikimate 1-carboxyvinyltransferase 1 of Streptomyces coelicolor (strain ATCC BAA-471 / A3(2) / M145).